A 308-amino-acid polypeptide reads, in one-letter code: Alpha/beta hydrolase domain-containing protein WAV2 (308 aa).

Residues 6 to 26 (SALFYGFGGIVVAGVALLVAF) traverse the membrane as a helical segment. Residues Ser159, Asp243, and Arg308 each act as charge relay system in the active site.

The protein belongs to the serine esterase family. In terms of tissue distribution, expressed in roots, rosette leaves, stems and flowers.

It is found in the cell membrane. In terms of biological role, involved in the regulation of root growth. Involved in the suppression of the root bending in response to touch stimuli, gravity and light. Negatively regulates stimulus-induced root bending through inhibition of root tip rotation. This Arabidopsis thaliana (Mouse-ear cress) protein is Alpha/beta hydrolase domain-containing protein WAV2.